The chain runs to 397 residues: Alanine racemase, biosynthetic (397 aa).

Lysine 42 acts as the Proton acceptor; specific for D-alanine in catalysis. Lysine 42 bears the N6-(pyridoxal phosphate)lysine mark. Arginine 136 contacts substrate. The active-site Proton acceptor; specific for L-alanine is tyrosine 257. Methionine 305 is a binding site for substrate. The interval 373 to 397 (ANRPTEAMSNPSRAKSRPMDKQALI) is disordered.

Belongs to the alanine racemase family. Requires pyridoxal 5'-phosphate as cofactor.

It catalyses the reaction L-alanine = D-alanine. It functions in the pathway amino-acid biosynthesis; D-alanine biosynthesis; D-alanine from L-alanine: step 1/1. It participates in cell wall biogenesis; peptidoglycan biosynthesis. Catalyzes the interconversion of L-alanine and D-alanine. Provides the D-alanine required for cell wall biosynthesis. The sequence is that of Alanine racemase, biosynthetic (alr) from Mesorhizobium japonicum (strain LMG 29417 / CECT 9101 / MAFF 303099) (Mesorhizobium loti (strain MAFF 303099)).